The primary structure comprises 1254 residues: MASESAAMDILDSAEASLNVASTALVEKEKKVQPATDETTPEKKAKMEIDAEMKDLTNDIPNSRKSQEKDPDALEDAKDPEADSSIELLCSPTPAEATDVDAMASKTESDNSVELLESPLKSPSSNDVNDEELLPLEEKEKPGPAKELEPKESEPDSKESSKSEALADSSIELISSPTSDDSLAKEKEVEVKEEHGQQAEAQVLQEIPRKADDSFKLQDDIAMEEDVPVPRSKAMQESKETQKTSKTTTKLEPLVDSIKDAIEDCINCNCKRLKKQYVLACVAILNFYKVPRKLKRSQYVCLDCYDTAVEMYEEYAGLLLAKQPLLLREFKQEQADFVTLDSSDEEEDEKTPEKPEFSKNVLDLIENELEDAIKKTLNKVEFSNQFNWSKTILQAKIERLAKKFEEVDLQLAQVQGLADKMHCSVYNSCQVVHKQLPPLDLHQNICPSDYKRLQQLPAAGDIVRPPIKIGETYYAVKNKAIASWVSVSVMEICDTTTGGGVTVKAYKIKYQHMPYPMMKTVAAKHLAYFDPPTVRLPIGTRVIAFFDGTLVGGKEKGVVQSAFYPGIIAEPLKQNNRFRYLIFYDDGYTQYVHHSDVRLVCQASEKVWEDVHPASRDFIQKYVERYAVDRPMVQCTKGQSMNTESNGTWLYARVIEVDCSLVLMQFEADKNHTEWIYRGSLRLAPVFKETQNSLNADCAIHQMRVPRRTEPFIRYTKEMESSNMQVDQQIRAIARKSTSKSGSPASTAAPPTGSSSSSAVRHLNNSTIYVDDDTRPKGQVVHFTAKRNMPPKIFKSHKCNPGCPFPMMHRLDSYSPLSKPLLSGWERMFMKQKTKRTVVYRGPCGRNLRNMAEVHNYLRLTNNVLNVDNFDFTPDLRCLAEYYIESTIVKEADISKGQEKMAIPLVNYYDNTLPPPCEYAKQRIPTEGVNLNLDEEFLVCCDCEDDCSDKESCACWQLTVTGVRYCNPKKPIEEIGYQYKRLHEGVLTGIYECNSRCKCKKNCLNRVVQHSLEMKLQVFKTSNRGWGLRCVNDIPKGAFVCIYAGHLLTEAKANEGGQDAGDEYFADLDYIEVAEQLKEGYESDVERADLDHEDDNYGPDAEDDDDFRPNNYYQKKKEKLRSSRSNSSSTQNTELDSQERTVISFNPNTDLDETVRENSVRRFFGKDQTPFIMDAKTTGNLGRYFNHSCSPNLFVQNVFVDTHDLRFPWVGFFASSHIRSGTELTWNYNYEVGVVPNKVLYCQCGAQNCRVRLL.

Disordered regions lie at residues 24–209 (ALVE…EIPR) and 228–248 (PVPRSKAMQESKETQKTSKTT). Basic and acidic residues-rich tracts occupy residues 40–57 (TPEKKAKMEIDAEMKDLT) and 65–81 (KSQEKDPDALEDAKDPE). The span at 112–125 (SVELLESPLKSPSS) shows a compositional bias: low complexity. Basic and acidic residues predominate over residues 136–162 (LEEKEKPGPAKELEPKESEPDSKESSK). Polar residues predominate over residues 172–181 (ELISSPTSDD). 2 stretches are compositionally biased toward basic and acidic residues: residues 182–197 (SLAKEKEVEVKEEHGQ) and 234–243 (AMQESKETQK). The stretch at 391-416 (TILQAKIERLAKKFEEVDLQLAQVQG) forms a coiled coil. Tudor domains lie at 535–607 (RLPI…SEKV) and 634–691 (QCTK…KETQ). Residues 734–760 (ARKSTSKSGSPASTAAPPTGSSSSSAV) are disordered. Residues 739–759 (SKSGSPASTAAPPTGSSSSSA) are compositionally biased toward low complexity. Residues 811-877 (LDSYSPLSKP…DNFDFTPDLR (67 aa)) form the MBD domain. The region spanning 939-1011 (VCCDCEDDCS…NCLNRVVQHS (73 aa)) is the Pre-SET domain. Zn(2+)-binding residues include Cys941, Cys943, Cys947, Cys953, Cys955, Cys993, Cys997, Cys999, and Cys1003. The region spanning 1014 to 1229 (MKLQVFKTSN…SGTELTWNYN (216 aa)) is the SET domain. S-adenosyl-L-methionine is bound by residues 1024–1026 (RGW), Asp1062, and Tyr1064. Residues 1081 to 1090 (YESDVERADL) are compositionally biased toward basic and acidic residues. Residues 1081-1139 (YESDVERADLDHEDDNYGPDAEDDDDFRPNNYYQKKKEKLRSSRSNSSSTQNTELDSQE) are disordered. Acidic residues predominate over residues 1091–1106 (DHEDDNYGPDAEDDDD). Over residues 1123–1134 (SRSNSSSTQNTE) the composition is skewed to low complexity. S-adenosyl-L-methionine is bound by residues Arg1183 and 1186–1187 (NH). Zn(2+) is bound by residues Cys1189, Cys1242, Cys1244, and Cys1249. The 17-residue stretch at 1238-1254 (KVLYCQCGAQNCRVRLL) folds into the Post-SET domain.

This sequence belongs to the class V-like SAM-binding methyltransferase superfamily. Histone-lysine methyltransferase family. Suvar3-9 subfamily.

The protein localises to the nucleus. It localises to the chromosome. It catalyses the reaction L-lysyl(9)-[histone H3] + 3 S-adenosyl-L-methionine = N(6),N(6),N(6)-trimethyl-L-lysyl(9)-[histone H3] + 3 S-adenosyl-L-homocysteine + 3 H(+). In terms of biological role, histone methyltransferase that specifically trimethylates 'Lys-9' of histone H3 in ovary. H3 'Lys-9' trimethylation represents a specific tag for epigenetic transcriptional repression by recruiting Su(var)205/HP1 to methylated histones. Plays a central role during oogenesis. The sequence is that of Histone-lysine N-methyltransferase eggless (egg) from Drosophila pseudoobscura pseudoobscura (Fruit fly).